Here is a 225-residue protein sequence, read N- to C-terminus: Cytidylate kinase (225 aa).

10-18 (GPASSGKST) is an ATP binding site.

Belongs to the cytidylate kinase family. Type 1 subfamily.

The protein localises to the cytoplasm. The catalysed reaction is CMP + ATP = CDP + ADP. It catalyses the reaction dCMP + ATP = dCDP + ADP. The protein is Cytidylate kinase of Streptococcus sanguinis (strain SK36).